A 384-amino-acid polypeptide reads, in one-letter code: Queuine tRNA-ribosyltransferase (384 aa).

Asp-92 functions as the Proton acceptor in the catalytic mechanism. Residues 92 to 96, Asp-146, Gln-190, and Gly-217 contribute to the substrate site; that span reads DSGGF. Residues 248 to 254 form an RNA binding region; that stretch reads GVGRPED. Asp-267 acts as the Nucleophile in catalysis. Residues 272–276 are RNA binding; important for wobble base 34 recognition; sequence TRHAR. Zn(2+)-binding residues include Cys-305, Cys-307, Cys-310, and His-337.

Belongs to the queuine tRNA-ribosyltransferase family. Homodimer. Within each dimer, one monomer is responsible for RNA recognition and catalysis, while the other monomer binds to the replacement base PreQ1. Requires Zn(2+) as cofactor.

It catalyses the reaction 7-aminomethyl-7-carbaguanine + guanosine(34) in tRNA = 7-aminomethyl-7-carbaguanosine(34) in tRNA + guanine. The protein operates within tRNA modification; tRNA-queuosine biosynthesis. Its function is as follows. Catalyzes the base-exchange of a guanine (G) residue with the queuine precursor 7-aminomethyl-7-deazaguanine (PreQ1) at position 34 (anticodon wobble position) in tRNAs with GU(N) anticodons (tRNA-Asp, -Asn, -His and -Tyr). Catalysis occurs through a double-displacement mechanism. The nucleophile active site attacks the C1' of nucleotide 34 to detach the guanine base from the RNA, forming a covalent enzyme-RNA intermediate. The proton acceptor active site deprotonates the incoming PreQ1, allowing a nucleophilic attack on the C1' of the ribose to form the product. After dissociation, two additional enzymatic reactions on the tRNA convert PreQ1 to queuine (Q), resulting in the hypermodified nucleoside queuosine (7-(((4,5-cis-dihydroxy-2-cyclopenten-1-yl)amino)methyl)-7-deazaguanosine). This is Queuine tRNA-ribosyltransferase from Xylella fastidiosa (strain M12).